Consider the following 164-residue polypeptide: Zinc finger protein ZAT8 (164 aa).

2 C2H2-type zinc fingers span residues 37–59 and 85–107; these read FRCK…RASH and HPCP…MRRH.

It localises to the nucleus. In terms of biological role, probable transcription factor that may be involved in stress responses. In Arabidopsis thaliana (Mouse-ear cress), this protein is Zinc finger protein ZAT8 (ZAT8).